Reading from the N-terminus, the 289-residue chain is Xyloglucan endotransglucosylase/hydrolase protein 15 (289 aa).

An N-terminal signal peptide occupies residues 1–25; that stretch reads MGPSSSLTTIVATVLLVTLFGSAYA. Residues 26–216 enclose the GH16 domain; the sequence is SNFFDEFDLT…WSKAPFTAYY (191 aa). Glutamate 102 acts as the Nucleophile in catalysis. Glutamate 106 (proton donor) is an active-site residue. Residue glutamate 106 participates in xyloglucan binding. Residue asparagine 110 is glycosylated (N-linked (GlcNAc...) asparagine). Xyloglucan-binding positions include 119–121, 129–131, 195–196, and glycine 200; these read HTN, DRE, and DW. 2 disulfide bridges follow: cysteine 224/cysteine 230 and cysteine 270/cysteine 284. Arginine 275 lines the xyloglucan pocket.

The protein belongs to the glycosyl hydrolase 16 family. XTH group 2 subfamily. Contains at least one intrachain disulfide bond essential for its enzymatic activity. As to expression, strongly expressed in roots, hypocotyls and cotyledons. Aslo detected in inflorescence stems and in the carpels and styles in flowers.

Its subcellular location is the secreted. The protein resides in the cell wall. It is found in the extracellular space. The protein localises to the apoplast. It carries out the reaction breaks a beta-(1-&gt;4) bond in the backbone of a xyloglucan and transfers the xyloglucanyl segment on to O-4 of the non-reducing terminal glucose residue of an acceptor, which can be a xyloglucan or an oligosaccharide of xyloglucan.. It catalyses the reaction xyloglucan + H2O = xyloglucan oligosaccharides.. Functionally, catalyzes xyloglucan endohydrolysis (XEH) and/or endotransglycosylation (XET). Cleaves and religates xyloglucan polymers, an essential constituent of the primary cell wall, and thereby participates in cell wall construction of growing tissues. Has a high XET activity, but little or no XEH activity in vitro. Acceptor preferences are XXXGol &gt; XLLGol = XLFGol &gt; XXLGol &gt; XXFGol. The protein is Xyloglucan endotransglucosylase/hydrolase protein 15 of Arabidopsis thaliana (Mouse-ear cress).